The primary structure comprises 226 residues: Glutathione peroxidase 3 (226 aa).

The first 24 residues, 1–24, serve as a signal peptide directing secretion; the sequence is MARILRASCLLSLLLAGFVPPGRG. U73 is a catalytic residue. Position 73 (U73) is a non-standard amino acid, selenocysteine.

The protein belongs to the glutathione peroxidase family. Homotetramer. In terms of tissue distribution, secreted in plasma.

The protein localises to the secreted. It catalyses the reaction 2 glutathione + H2O2 = glutathione disulfide + 2 H2O. It carries out the reaction tert-butyl hydroperoxide + 2 glutathione = tert-butanol + glutathione disulfide + H2O. Protects cells and enzymes from oxidative damage, by catalyzing the reduction of hydrogen peroxide, lipid peroxides and organic hydroperoxide, by glutathione. The protein is Glutathione peroxidase 3 of Mus musculus (Mouse).